The chain runs to 27 residues: Defensin-like protein 1 (27 aa).

Glutamine 1 carries the post-translational modification Pyrrolidone carboxylic acid.

Belongs to the DEFL family. In terms of assembly, forms oligomers in its native state.

In terms of biological role, possesses antifungal activity sensitive to inorganic cations. This chain is Defensin-like protein 1, found in Brassica campestris (Field mustard).